The sequence spans 234 residues: Dienlactone hydrolase 2 (234 aa).

Active-site residues include C143, D167, and H199.

The protein belongs to the dienelactone hydrolase family.

Its pathway is xenobiotic degradation. Dienlactone hydrolase; part of the Fusarium detoxification of benzoxazolinone cluster 2 (FDB2) involved in the degradation of benzoxazolinones produced by the host plant. Maize, wheat, and rye produce the 2 benzoxazinone phytoanticipins 2,4-dihy-droxy-7-methoxy-1,4-benzoxazin-3-one (DIMBOA) and 2,4-dihydroxy-1,4-benzoxazin-3-one (DIBOA) that, due to their inherent instability once released, spontaneously degrade to the more stable corresponding benzoxazolinones, 6-methoxy-2-benzoxazolinone (MBOA) and 2-benzoxazolinone (BOA), respectively. The first step in the detoxification of benzoxazolinones involves the hydrolysis of the cyclic ester bond of benzoxazolinones by the FDB1 cluster gamma-lactamase MBL1 to aminophenols. MBL1 is able to convert BOA into 2-aminophenol (2-AP), as well as MBOA into 5-methoxy-2-aminophenol (2-AMP). The FDB2 cluster N-malonyltransferase FDB2/NAT1 then metabolizes aminophenols via N-malonylation to non-toxic malonamic acids. FDB2/NAT1 converts 2-AP into N-(2-hydroxyphenyl) malonamic acid (HPMA) and 2-AMP into N-(2-hydroxy-4-methoxyphenyl) malonamic acid (HMPMA). The duplicated dienlactone hydrolases DLH1 and DLH2 may provide redundant function for hydrolyzing the lactone moiety in the BOA molecule. The roles of the amidases and other enzymes encoded by the 2 FDB clusters have not been identified so far. The polypeptide is Dienlactone hydrolase 2 (Gibberella moniliformis (strain M3125 / FGSC 7600) (Maize ear and stalk rot fungus)).